Here is a 692-residue protein sequence, read N- to C-terminus: Elongation factor G 2 (692 aa).

The tr-type G domain maps to 8-283 (EKTRNIGIMA…AVIDYMPSPV (276 aa)). GTP contacts are provided by residues 17–24 (AHIDAGKT), 81–85 (DTPGH), and 135–138 (NKMD).

It belongs to the TRAFAC class translation factor GTPase superfamily. Classic translation factor GTPase family. EF-G/EF-2 subfamily.

It localises to the cytoplasm. In terms of biological role, catalyzes the GTP-dependent ribosomal translocation step during translation elongation. During this step, the ribosome changes from the pre-translocational (PRE) to the post-translocational (POST) state as the newly formed A-site-bound peptidyl-tRNA and P-site-bound deacylated tRNA move to the P and E sites, respectively. Catalyzes the coordinated movement of the two tRNA molecules, the mRNA and conformational changes in the ribosome. The polypeptide is Elongation factor G 2 (Syntrophotalea carbinolica (strain DSM 2380 / NBRC 103641 / GraBd1) (Pelobacter carbinolicus)).